The chain runs to 217 residues: Deoxyribose-phosphate aldolase (217 aa).

Residue Asp89 is the Proton donor/acceptor of the active site. The Schiff-base intermediate with acetaldehyde role is filled by Lys151. Residue Lys180 is the Proton donor/acceptor of the active site.

The protein belongs to the DeoC/FbaB aldolase family. DeoC type 1 subfamily.

It is found in the cytoplasm. The catalysed reaction is 2-deoxy-D-ribose 5-phosphate = D-glyceraldehyde 3-phosphate + acetaldehyde. The protein operates within carbohydrate degradation; 2-deoxy-D-ribose 1-phosphate degradation; D-glyceraldehyde 3-phosphate and acetaldehyde from 2-deoxy-alpha-D-ribose 1-phosphate: step 2/2. Functionally, catalyzes a reversible aldol reaction between acetaldehyde and D-glyceraldehyde 3-phosphate to generate 2-deoxy-D-ribose 5-phosphate. This chain is Deoxyribose-phosphate aldolase, found in Mycoplasma mobile (strain ATCC 43663 / 163K / NCTC 11711) (Mesomycoplasma mobile).